The chain runs to 410 residues: Dipeptidase ataJ (410 aa).

The Zn(2+) site is built by histidine 27, aspartate 29, and glutamate 138. A substrate-binding site is contributed by histidine 165. The interval 180–200 is disordered; that stretch reads TSSPWSEYGGQTHDPGDEPSR. Substrate-binding residues include arginine 258 and aspartate 318.

The protein belongs to the metallo-dependent hydrolases superfamily. Peptidase M19 family. The cofactor is Zn(2+).

It catalyses the reaction an L-aminoacyl-L-amino acid + H2O = 2 an L-alpha-amino acid. The protein operates within mycotoxin biosynthesis. Its function is as follows. Dipeptidase; part of the gene cluster that mediates the biosynthesis of acetylaranotin, a member of the epipolythiodioxopiperazine (ETP) class of toxins characterized by a disulfide-bridged cyclic dipeptide. The first step of acetylaranotin biosynthesis is performed by the NRPS ataP which produces diketopiperazine cyclo-L-Phe-L-Phe via the condensation of 2 phenylalanines (L-Phe). The ataC domain of ataTC then catalyzes the formation of bishydroxylation of cyclo-L-Phe-L-Phe. The glutathione S-transferase domain ataG in ataIMG further catalyzes the conjugation of two glutathiones to the bishydroxylated intermediate. Next, the dipeptidase ataJ removes the Glu residues. The following step is performed by the carbon sulfur lyase domain ataI of ataIMG which may convert the bis-cysteinyl adduct to yield an epidithiol intermediate. The ataT domain from ataTC then catalyzes the oxidation of the free dithiols, followed by a cyclization step catalyzed by the cytochrome P450 ataF. AtaF probably acts as an epoxidase to promote a dual epoxidation formation at C8 and C9 along with C8' and C9', followed by the spontaneous nucleophilic attack of the amide nitrogens N10 and N10' to yield an intermediate with the pyrrolidine partial structure. The final steps of acetylaranotin biosynthesis involve the acetylation and ring rearrangement of an epitetrathiodiketopiperazine intermediate to produce acetylaranotin. AtaH probably catalyzes the acetylation of epitetrathiodiketopiperazine to produce a diacetate and ataY is responsible for the formation of the dihydrooxepin moiety that converts the diacetate intermediate to acetylaranotin via acetylapoaranotin. Both enzymes could function independently in the absence of the other. The acetylaranotin bis-thiomethyltransferase ataS located outside of acetylaranotin gene cluster is the main thiomethyltransferase responsible for converting acetylaranotin and its related intermediates to their methylated forms. In Aspergillus terreus (strain NIH 2624 / FGSC A1156), this protein is Dipeptidase ataJ.